Reading from the N-terminus, the 755-residue chain is 1,4-alpha-glucan branching enzyme GlgB (755 aa).

The active-site Nucleophile is the Asp-431. The active-site Proton donor is Glu-484.

This sequence belongs to the glycosyl hydrolase 13 family. GlgB subfamily. As to quaternary structure, monomer.

The catalysed reaction is Transfers a segment of a (1-&gt;4)-alpha-D-glucan chain to a primary hydroxy group in a similar glucan chain.. It functions in the pathway glycan biosynthesis; glycogen biosynthesis. Its function is as follows. Catalyzes the formation of the alpha-1,6-glucosidic linkages in glycogen by scission of a 1,4-alpha-linked oligosaccharide from growing alpha-1,4-glucan chains and the subsequent attachment of the oligosaccharide to the alpha-1,6 position. In Prochlorococcus marinus (strain NATL2A), this protein is 1,4-alpha-glucan branching enzyme GlgB.